The sequence spans 215 residues: Pyridoxine/pyridoxamine 5'-phosphate oxidase (215 aa).

Substrate contacts are provided by residues 9–12 (RRDY) and lysine 69. FMN is bound by residues 64 to 69 (RVLLLK), 79 to 80 (FT), lysine 86, and glutamine 108. Substrate-binding residues include tyrosine 126, arginine 130, and serine 134. Residues 143–144 (QS) and tryptophan 188 contribute to the FMN site. 194 to 196 (RLH) is a substrate binding site. Position 198 (arginine 198) interacts with FMN.

This sequence belongs to the pyridoxamine 5'-phosphate oxidase family. Homodimer. The cofactor is FMN.

The enzyme catalyses pyridoxamine 5'-phosphate + O2 + H2O = pyridoxal 5'-phosphate + H2O2 + NH4(+). It carries out the reaction pyridoxine 5'-phosphate + O2 = pyridoxal 5'-phosphate + H2O2. It participates in cofactor metabolism; pyridoxal 5'-phosphate salvage; pyridoxal 5'-phosphate from pyridoxamine 5'-phosphate: step 1/1. The protein operates within cofactor metabolism; pyridoxal 5'-phosphate salvage; pyridoxal 5'-phosphate from pyridoxine 5'-phosphate: step 1/1. In terms of biological role, catalyzes the oxidation of either pyridoxine 5'-phosphate (PNP) or pyridoxamine 5'-phosphate (PMP) into pyridoxal 5'-phosphate (PLP). The polypeptide is Pyridoxine/pyridoxamine 5'-phosphate oxidase (Pseudomonas savastanoi pv. phaseolicola (strain 1448A / Race 6) (Pseudomonas syringae pv. phaseolicola (strain 1448A / Race 6))).